Reading from the N-terminus, the 986-residue chain is LRR receptor-like serine/threonine-protein kinase ER2 (986 aa).

Residues 1 to 21 (MTTTTTTRLLLAAILLAVAAA) form the signal peptide. Topologically, residues 22 to 581 (DDDGQTLLEI…VQRSSVSRSA (560 aa)) are extracellular. 2 N-linked (GlcNAc...) asparagine glycosylation sites follow: N64 and N73. LRR repeat units lie at residues 68–89 (AVAALNLSGLNLGGEISPAIGN), 90–114 (LKSVESIDLKSNELSGQIPDEIGDC), 116–138 (SLKTLDLSSNNLGGDIPFSISKL), 139–161 (KHLENLILKNNQLVGMIPSTLSQ), 162–186 (LPNLKILDLAQNKLNGEIPRLIYWN), 188–210 (VLQYLGLRSNNLEGSLSPEMCQL), 211–233 (TGLWYFDVKNNSLTGIIPDTIGN), 234–259 (CTSFQVLDLSYNRLTGEIPFNIGFLQ), 261–280 (ATLSLQGNNFSGPIPSVIGL), 281–304 (MQALAVLDLSFNQLSGPIPSILGN), 306–329 (TYTEKLYLQGNRLTGSIPPELGNM), 330–352 (STLHYLELNDNQLTGFIPPELGK), 354–377 (TGLFDLNLANNNLEGPIPDNISSC), 379–401 (NLISFNAYGNKLNGTVPRSLHKL), 402–425 (ESITYLNLSSNYLSGAIPIELAKM), 427–449 (NLDTLDLSCNMVAGPIPSAIGSL), 450–472 (EHLLRLNFSNNNLVGYIPAEFGN), 473–498 (LRSIMEIDLSSNHLGGLIPQEVGMLQ), 500–520 (LILLKLESNNITGDVSSLINC), and 521–545 (FSLNVLNVSYNNLAGIVPTDNNFSR). N220 and N233 each carry an N-linked (GlcNAc...) asparagine glycan. N-linked (GlcNAc...) asparagine glycans are attached at residues N269, N304, and N328. Residues N373, N391, and N408 are each glycosylated (N-linked (GlcNAc...) asparagine). N456 is a glycosylation site (N-linked (GlcNAc...) asparagine). N-linked (GlcNAc...) asparagine glycans are attached at residues N509, N527, and N542. The helical transmembrane segment at 582 to 602 (ILGIAVAGLVILLMILAAACW) threads the bilayer. Over 603–986 (PHWAQVPKDV…FGEVISQNTE (384 aa)) the chain is Cytoplasmic. The Protein kinase domain occupies 653-934 (LSEKYIIGYG…YPDPPSKPAL (282 aa)). ATP is bound by residues 659–667 (IGYGASSTV) and K681. The active-site Proton acceptor is the D779.

The protein belongs to the protein kinase superfamily. Ser/Thr protein kinase family.

The protein resides in the cell membrane. It carries out the reaction L-seryl-[protein] + ATP = O-phospho-L-seryl-[protein] + ADP + H(+). It catalyses the reaction L-threonyl-[protein] + ATP = O-phospho-L-threonyl-[protein] + ADP + H(+). Functionally, receptor kinase that may be involved in the regulation of cell proliferation and cell growth. This chain is LRR receptor-like serine/threonine-protein kinase ER2, found in Oryza sativa subsp. japonica (Rice).